Consider the following 845-residue polypeptide: Receptor-like protein Cf-9 homolog (845 aa).

The signal sequence occupies residues 1 to 19 (MGCVKLVFFMLLKLDLLEF). An N-cap region spans residues 20 to 70 (KNMFTVNPNASDYCYDYTDQRMQSYPRTLFWNKSTDCCSWDGIHCDETTGQ). Residues 20-794 (KNMFTVNPNA…EEDSPMISWQ (775 aa)) are Extracellular-facing. N-linked (GlcNAc...) asparagine glycans are attached at residues N28, N51, and N88. One copy of the LRR 1; degenerate repeat lies at 71-94 (VVELDLRCSQLQGKFHSNSSLFQL). 25 LRR repeats span residues 95–118 (SNLK…KFGE), 119–143 (FSDL…ISHL), 144–171 (SKLH…LKNL), 172–193 (TQLR…SNFS), 194–217 (SHLT…VFHL), 219–242 (DLEF…KWNS), 244–266 (ASLM…SFSH), 267–291 (LTSL…LWNL), 292–316 (TNIE…RFEK), 318–338 (KRLS…SFNR), 340–364 (WTQL…VSGL), 365–388 (QNLG…IFSL), 390–410 (SLVV…EFKS), 411–434 (KTLS…LLNQ), 436–458 (SLQF…ICNL), 459–482 (KTLM…VGER), 484–506 (EYLL…TFSI), 507–531 (GNSF…LINC), 532–554 (KYLK…WLGY), 555–579 (LSQL…GSTN), 581–605 (FMRL…ILGN), 649–672 (LDSN…IIGD), 673–696 (LVGL…SFQN), 698–721 (SVLE…LASL), and 723–741 (FLEV…IPKG). N-linked (GlcNAc...) asparagine glycosylation is found at N131, N170, N183, and N191. N241 carries an N-linked (GlcNAc...) asparagine glycan. N-linked (GlcNAc...) asparagine glycosylation is found at N279 and N290. 4 N-linked (GlcNAc...) asparagine glycosylation sites follow: N337, N360, N378, and N398. A glycan (N-linked (GlcNAc...) asparagine) is linked at N446. N-linked (GlcNAc...) asparagine glycosylation is present at N501. N545 carries an N-linked (GlcNAc...) asparagine glycan. N656, N680, and N696 each carry an N-linked (GlcNAc...) asparagine glycan. N-linked (GlcNAc...) asparagine glycosylation is found at N728 and N749. A C-cap/acidic domain region spans residues 742-794 (KQFDSFGNTSYQGNDGLRGFPLSKLCGVDDQVTTPAELDQEEEEEDSPMISWQ). The chain crosses the membrane as a helical span at residues 795–815 (GVLVGYGCGLVIGLSVIYIMW). Residues 816–845 (STQYPAWFSRMDLKLEHIITTRMKKHKKRY) are Cytoplasmic-facing.

Belongs to the RLP family.

The protein localises to the cell membrane. In terms of biological role, at the opposite of its homolog Cf-9 found in S.pimpinellifolium, was not able to confer resistance to the fungal pathogen C.fulvum. This Solanum lycopersicum (Tomato) protein is Receptor-like protein Cf-9 homolog.